The sequence spans 374 residues: Nudix hydrolase 20, chloroplastic (374 aa).

Residues Met1–Ser49 constitute a chloroplast transit peptide. Residues Gly205–Asp346 form the Nudix hydrolase domain. A Nudix box motif is present at residues Gly244–Gly265. The Mg(2+) site is built by Glu259 and Glu263.

This sequence belongs to the Nudix hydrolase family. The cofactor is Mg(2+). Requires Mn(2+) as cofactor. In terms of tissue distribution, expressed in leaves and inflorescences.

It localises to the plastid. Its subcellular location is the chloroplast. In terms of biological role, probably mediates the hydrolysis of some nucleoside diphosphate derivatives. The chain is Nudix hydrolase 20, chloroplastic (NUDT20) from Arabidopsis thaliana (Mouse-ear cress).